The primary structure comprises 968 residues: RNA polymerase-associated protein RapA (968 aa).

The 171-residue stretch at 164 to 334 (DVGRRHAPRV…FARLRLLDPN (171 aa)) folds into the Helicase ATP-binding domain. 177–184 (DEVGLGKT) provides a ligand contact to ATP. A DEAH box motif is present at residues 280-283 (DEAH). Residues 490-662 (RVEWLMGYLT…YLASPDQTEG (173 aa)) enclose the Helicase C-terminal domain.

The protein belongs to the SNF2/RAD54 helicase family. RapA subfamily. Interacts with the RNAP. Has a higher affinity for the core RNAP than for the holoenzyme. Its ATPase activity is stimulated by binding to RNAP.

Transcription regulator that activates transcription by stimulating RNA polymerase (RNAP) recycling in case of stress conditions such as supercoiled DNA or high salt concentrations. Probably acts by releasing the RNAP, when it is trapped or immobilized on tightly supercoiled DNA. Does not activate transcription on linear DNA. Probably not involved in DNA repair. This chain is RNA polymerase-associated protein RapA, found in Escherichia coli (strain 55989 / EAEC).